The sequence spans 126 residues: Large ribosomal subunit protein uL22 (126 aa).

This sequence belongs to the universal ribosomal protein uL22 family. In terms of assembly, part of the 50S ribosomal subunit.

Functionally, this protein binds specifically to 23S rRNA; its binding is stimulated by other ribosomal proteins, e.g. L4, L17, and L20. It is important during the early stages of 50S assembly. It makes multiple contacts with different domains of the 23S rRNA in the assembled 50S subunit and ribosome. In terms of biological role, the globular domain of the protein is located near the polypeptide exit tunnel on the outside of the subunit, while an extended beta-hairpin is found that lines the wall of the exit tunnel in the center of the 70S ribosome. In Zymomonas mobilis subsp. mobilis (strain ATCC 31821 / ZM4 / CP4), this protein is Large ribosomal subunit protein uL22.